Consider the following 440-residue polypeptide: Tubby-like F-box protein 13 (440 aa).

Residues 51 to 106 (SCWASLPPELLRDIIERLEESEATWPSRKHVVACAGVCRTWREMCKEIVKNPELCG) enclose the F-box domain.

It belongs to the TUB family. Ubiquitous.

The sequence is that of Tubby-like F-box protein 13 (TULP13) from Oryza sativa subsp. japonica (Rice).